Here is a 250-residue protein sequence, read N- to C-terminus: 1-(5-phosphoribosyl)-5-[(5-phosphoribosylamino)methylideneamino] imidazole-4-carboxamide isomerase (250 aa).

Catalysis depends on aspartate 10, which acts as the Proton acceptor. Aspartate 131 acts as the Proton donor in catalysis.

It belongs to the HisA/HisF family.

It localises to the cytoplasm. The catalysed reaction is 1-(5-phospho-beta-D-ribosyl)-5-[(5-phospho-beta-D-ribosylamino)methylideneamino]imidazole-4-carboxamide = 5-[(5-phospho-1-deoxy-D-ribulos-1-ylimino)methylamino]-1-(5-phospho-beta-D-ribosyl)imidazole-4-carboxamide. It functions in the pathway amino-acid biosynthesis; L-histidine biosynthesis; L-histidine from 5-phospho-alpha-D-ribose 1-diphosphate: step 4/9. This chain is 1-(5-phosphoribosyl)-5-[(5-phosphoribosylamino)methylideneamino] imidazole-4-carboxamide isomerase, found in Desulfitobacterium hafniense (strain DSM 10664 / DCB-2).